We begin with the raw amino-acid sequence, 166 residues long: MFKKLFGKGKEVQKDIAIYAPLTGEFVKIEDIPDPVFAQKMMGEGFGINPTEGEVVSPIAGRVDNVFPTKHAIGLKADNGLELLVHIGLDTVQLDGEGFEVLVSSGDEVNVGDPLVRFNLEYINNNAKSVISPIIITNTDQAASINIYDENAVIKGETKVIDVTMN.

Residues 34 to 138 (DPVFAQKMMG…SVISPIIITN (105 aa)) form the PTS EIIA type-1 domain. Residues histidine 71 and histidine 86 each contribute to the Zn(2+) site. The active-site Tele-phosphohistidine intermediate; for EIIA activity is histidine 86. Position 86 is a phosphohistidine; by HPr (histidine 86).

As to quaternary structure, heterodimer with glycerol kinase (glpk). Requires Zn(2+) as cofactor.

It is found in the cytoplasm. The phosphoenolpyruvate-dependent sugar phosphotransferase system (sugar PTS), a major carbohydrate active transport system, catalyzes the phosphorylation of incoming sugar substrates concomitantly with their translocation across the cell membrane. The enzyme II complex composed of PtsG and Crr is involved in glucose transport. This Staphylococcus aureus (strain COL) protein is PTS system glucose-specific EIIA component (crr).